A 188-amino-acid chain; its full sequence is Photosystem I assembly protein Ycf4 (188 aa).

2 helical membrane-spanning segments follow: residues 28 to 48 and 68 to 88; these read WATV…SSYL and IAIG…WATI.

This sequence belongs to the Ycf4 family.

The protein resides in the cellular thylakoid membrane. Seems to be required for the assembly of the photosystem I complex. The chain is Photosystem I assembly protein Ycf4 from Cyanothece sp. (strain PCC 7425 / ATCC 29141).